A 1921-amino-acid chain; its full sequence is Disks large homolog 5 (1921 aa).

The region spanning 1–90 is the CARD domain; sequence MEPQRRELLA…HLLPILYLNG (90 aa). Residues 116–143 form a disordered region; that stretch reads ESSSSLSSVGTTGKAPSPPPLLTEQQAN. The stretch at 139–601 forms a coiled coil; the sequence is EQQANDTVEN…KEARFRQLMA (463 aa). S264 and S295 each carry phosphoserine. PDZ domains lie at 620–710 and 705–796; these read VVEF…RRRK and VVRR…LKVF. A disordered region spans residues 857–898; the sequence is ELGHSGGSSSFLHKPFSGSSSPVSPQACPSTSERSLNSFRSD. Positions 873–898 are enriched in polar residues; the sequence is SGSSSPVSPQACPSTSERSLNSFRSD. The residue at position 900 (S900) is a Phosphoserine. The interval 930 to 1121 is disordered; sequence EVPLDKIDPE…RPKSAPSFRP (192 aa). Residue T984 is modified to Phosphothreonine. S1000 carries the phosphoserine modification. T1011 carries the phosphothreonine modification. A compositionally biased stretch (basic and acidic residues) spans 1017-1030; the sequence is RRSDSIKFQHRLET. S1021 carries the post-translational modification Phosphoserine. Over residues 1045–1055 the composition is skewed to pro residues; sequence TSPPSAPPPSM. At T1183 the chain carries Phosphothreonine. Disordered regions lie at residues 1204-1227, 1243-1266, and 1280-1343; these read VLPC…SVQH, YSEM…SSSN, and PRYP…KDRP. Phosphoserine is present on S1209. The segment covering 1217–1227 has biased composition (polar residues); that stretch reads GSQSLSPSVQH. Low complexity predominate over residues 1252–1266; that stretch reads SNSLPSSARLGSSSN. The residue at position 1263 (S1263) is a Phosphoserine. Residues 1292 to 1324 show a composition bias toward polar residues; it reads GSLSHSECSTPPRSPLNIDTLSSCSQPQTTAST. S1334 is modified (phosphoserine). In terms of domain architecture, PDZ 3 spans 1350–1429; that stretch reads HVKVQKGSEP…TITILAQYNP (80 aa). Polar residues-rich tracts occupy residues 1434-1443, 1450-1460, and 1483-1495; these read LNSHSRSSSH, PHSTLQGSSAG, and AKQS…SVGD. The disordered stretch occupies residues 1434 to 1501; the sequence is LNSHSRSSSH…SVGDTTKKTP (68 aa). The 82-residue stretch at 1504-1585 folds into the PDZ 4 domain; that stretch reads RIVFIKKSQL…SLRLKVQYRH (82 aa). In terms of domain architecture, SH3 spans 1596 to 1664; that stretch reads GDSFYIRALY…PSKYVMDQEF (69 aa). S1669 is subject to Phosphoserine. The Guanylate kinase-like domain maps to 1724-1907; that stretch reads DSVSLAYQRV…ICTQILAMVS (184 aa).

Belongs to the MAGUK family. In terms of assembly, interacts with MPP1. Interacts with CTNNB1 and with the third SH3 domain of SORBS3 to form a ternary complex. Interacts (via coiled-coil domain) with MARK3. Interacts (via PDZ domain 3) with STK3/MST2 and STK4/MST1. Interacts with SCRIB. Interacts with CTNB1. Interacts with SMO and (via PDZ4 or guanylate kinase-like domain) with KIF7. Brain (at protein level).

It is found in the cell junction. The protein resides in the cell membrane. The protein localises to the postsynaptic density. It localises to the cytoplasm. Its subcellular location is the cytoskeleton. It is found in the cilium basal body. Functionally, acts as a regulator of the Hippo signaling pathway. Negatively regulates the Hippo signaling pathway by mediating the interaction of MARK3 with STK3/4, bringing them together to promote MARK3-dependent hyperphosphorylation and inactivation of STK3 kinase activity toward LATS1. Positively regulates the Hippo signaling by mediating the interaction of SCRIB with STK4/MST1 and LATS1 which is important for the activation of the Hippo signaling pathway. Involved in regulating cell proliferation, maintenance of epithelial polarity, epithelial-mesenchymal transition (EMT), cell migration and invasion. Plays an important role in dendritic spine formation and synaptogenesis in cortical neurons; regulates synaptogenesis by enhancing the cell surface localization of N-cadherin. Acts as a positive regulator of hedgehog (Hh) signaling pathway. Plays a critical role in the early point of the SMO activity cycle by interacting with SMO at the ciliary base to induce the accumulation of KIF7 and GLI2 at the ciliary tip for GLI2 activation. The sequence is that of Disks large homolog 5 (Dlg5) from Mus musculus (Mouse).